The chain runs to 184 residues: Crossover junction endodeoxyribonuclease RuvC (184 aa).

Residues Asp-7, Glu-68, and Asp-141 contribute to the active site. Asp-7, Glu-68, and Asp-141 together coordinate Mg(2+).

Belongs to the RuvC family. As to quaternary structure, homodimer which binds Holliday junction (HJ) DNA. The HJ becomes 2-fold symmetrical on binding to RuvC with unstacked arms; it has a different conformation from HJ DNA in complex with RuvA. In the full resolvosome a probable DNA-RuvA(4)-RuvB(12)-RuvC(2) complex forms which resolves the HJ. The cofactor is Mg(2+).

It is found in the cytoplasm. The catalysed reaction is Endonucleolytic cleavage at a junction such as a reciprocal single-stranded crossover between two homologous DNA duplexes (Holliday junction).. Its function is as follows. The RuvA-RuvB-RuvC complex processes Holliday junction (HJ) DNA during genetic recombination and DNA repair. Endonuclease that resolves HJ intermediates. Cleaves cruciform DNA by making single-stranded nicks across the HJ at symmetrical positions within the homologous arms, yielding a 5'-phosphate and a 3'-hydroxyl group; requires a central core of homology in the junction. The consensus cleavage sequence is 5'-(A/T)TT(C/G)-3'. Cleavage occurs on the 3'-side of the TT dinucleotide at the point of strand exchange. HJ branch migration catalyzed by RuvA-RuvB allows RuvC to scan DNA until it finds its consensus sequence, where it cleaves and resolves the cruciform DNA. In Mycobacterium ulcerans (strain Agy99), this protein is Crossover junction endodeoxyribonuclease RuvC.